Reading from the N-terminus, the 335-residue chain is MSQEKYGVLMVNLGTPEAPTPRAVKRYLAEFLSDKRVVDTPRALWLPLLYGAILPLRSPRVAKLYQSVWMDEGSPLLVYSRRQQQALAASLPDVAVELAMSYGQPALPQAIARLLAQDITRLVILPLYPQYSCSTSAAIWDAVARILTGYRRLPSISFIRDYAAHPAYIAALAASVERAFTRHGRPDRLIISFHGIPQRYAEEGDDYPQRCDVTLQALAAALDYPPEQVMMTFQSRFGRDPWLLPATDETMKSLPSAGVQHVQVICPGFAADCLETLEEIQVQNREIFEHAGGSTFHYIPALNDDAAHVDLLHQLVTAALRPSAPPPAVVSLASF.

The Fe cation site is built by His194 and Glu275.

The protein belongs to the ferrochelatase family.

Its subcellular location is the cytoplasm. The catalysed reaction is heme b + 2 H(+) = protoporphyrin IX + Fe(2+). The protein operates within porphyrin-containing compound metabolism; protoheme biosynthesis; protoheme from protoporphyrin-IX: step 1/1. Its function is as follows. Catalyzes the ferrous insertion into protoporphyrin IX. This Sodalis glossinidius (strain morsitans) protein is Ferrochelatase.